A 533-amino-acid polypeptide reads, in one-letter code: Subtilisin-like protease 1 (533 aa).

Residues 1–19 form the signal peptide; that stretch reads MGVFRFISISLAAVSAANA. The propeptide occupies 20–116; it reads AQILSMPHAQ…VEPDTIISVH (97 aa). One can recognise an Inhibitor I9 domain in the interval 34–115; the sequence is SYIVMMKDDT…FVEPDTIISV (82 aa). One can recognise a Peptidase S8 domain in the interval 126 to 400; sequence SWGLARISNP…NVLINNGGAK (275 aa). Active-site charge relay system residues include D158 and H190. Residues 175-198 are disordered; sequence GSNQVNDGDDRDGSGHGTHTSGTM. N-linked (GlcNAc...) asparagine glycosylation is found at N233 and N251. The span at 282-294 shows a compositional bias: polar residues; that stretch reads NDNQDAQSSSPAS. A disordered region spans residues 282–312; that stretch reads NDNQDAQSSSPASEPSVCTVGSSAEDDSRSS. Catalysis depends on S345, which acts as the Charge relay system. Positions 378-394 are enriched in polar residues; the sequence is TSSITDAGPGTPTNVLI. The tract at residues 378 to 512 is disordered; that stretch reads TSSITDAGPG…YPGGDNFDFD (135 aa). The segment covering 405–470 has biased composition (pro residues); that stretch reads NPNPAPSPSP…FPGEPFPGEP (66 aa). The span at 471-487 shows a compositional bias: low complexity; the sequence is FPGESFPGESFPGESAP. Positions 488–502 are enriched in pro residues; the sequence is APAPMPPSPQHPHTP.

This sequence belongs to the peptidase S8 family.

The protein resides in the secreted. Functionally, secreted subtilisin-like serine protease with keratinolytic activity that contributes to pathogenicity. The chain is Subtilisin-like protease 1 (SUB1) from Arthroderma benhamiae (strain ATCC MYA-4681 / CBS 112371) (Trichophyton mentagrophytes).